A 489-amino-acid chain; its full sequence is UDP-N-acetylmuramoylalanine--D-glutamate ligase (489 aa).

126–132 (GTNGKTT) provides a ligand contact to ATP.

Belongs to the MurCDEF family.

Its subcellular location is the cytoplasm. It catalyses the reaction UDP-N-acetyl-alpha-D-muramoyl-L-alanine + D-glutamate + ATP = UDP-N-acetyl-alpha-D-muramoyl-L-alanyl-D-glutamate + ADP + phosphate + H(+). It participates in cell wall biogenesis; peptidoglycan biosynthesis. Functionally, cell wall formation. Catalyzes the addition of glutamate to the nucleotide precursor UDP-N-acetylmuramoyl-L-alanine (UMA). The chain is UDP-N-acetylmuramoylalanine--D-glutamate ligase from Mycobacterium avium (strain 104).